A 233-amino-acid polypeptide reads, in one-letter code: UPF0502 protein Sden_2282 (233 aa).

The segment covering 178–198 (TQHQRPPQTPHLSSRTNVDNS) has biased composition (polar residues). A disordered region spans residues 178 to 204 (TQHQRPPQTPHLSSRTNVDNSYESDER).

Belongs to the UPF0502 family.

This Shewanella denitrificans (strain OS217 / ATCC BAA-1090 / DSM 15013) protein is UPF0502 protein Sden_2282.